Here is a 148-residue protein sequence, read N- to C-terminus: Lipid droplet organization protein LDO16 (148 aa).

The Cytoplasmic segment spans residues 1–7 (MVSTATF). Residues 8–28 (FFFVYLTLFVVIGFFSSLFII) traverse the membrane as a helical segment. Position 29 (P29) is a topological domain, lumenal. Residues 30–50 (LLGISFVFAIGVVSFGFCSNM) form a helical membrane-spanning segment. Over 51–148 (SFKMAQLIYV…NKAGNKFQLS (98 aa)) the chain is Cytoplasmic. The segment at 83–110 (QEPQEPLSTLRPVSNPTIPSPLRQTARP) is disordered. The segment covering 93–109 (RPVSNPTIPSPLRQTAR) has biased composition (polar residues). S102 carries the post-translational modification Phosphoserine.

It belongs to the OSW5 family. In terms of assembly, interacts specifically with the seipin complex FLD1-LDB16. Only a fraction appears to associate with the seipin core components, suggesting that it may be an ancillary subunit of the complex. Found to interact with many mitochondrial and peroxisomal proteins.

Its subcellular location is the endoplasmic reticulum membrane. It localises to the lipid droplet. Involved in lipid droplet (LD) organization. Functions primarily upon nutrient depletion, facilitating LD consumption by lipophagy. Required for correct LD distribution during entry into stationary phase, where LDs accumulate at nucleus-vacuole junction (NVJ) contact sites. Involved in membrane interaction in a manner similar to those of SNARE proteins, binding to partners present in mitochondria or peroxisomes. Its partner on the mitochondrion side might be TOM22, a mitochondrial outer membrane protein, linking lipid droplets and mitochondria by protein-protein interaction. Involved in spore wall assembly. This Saccharomyces cerevisiae (strain ATCC 204508 / S288c) (Baker's yeast) protein is Lipid droplet organization protein LDO16.